The primary structure comprises 559 residues: Asparagine--tRNA ligase, cytoplasmic (559 aa).

At S72 the chain carries Phosphoserine. The disordered stretch occupies residues 82–102 (HREQMKNDSREKKEAEDNLRR). Residue K255 is modified to N6-acetyllysine. Residue S493 is modified to Phosphoserine. K501 carries the N6-acetyllysine modification.

This sequence belongs to the class-II aminoacyl-tRNA synthetase family. Homodimer.

It is found in the cytoplasm. The enzyme catalyses tRNA(Asn) + L-asparagine + ATP = L-asparaginyl-tRNA(Asn) + AMP + diphosphate + H(+). Catalyzes the attachment of asparagine to tRNA(Asn) in a two-step reaction: asparagine is first activated by ATP to form Asn-AMP and then transferred to the acceptor end of tRNA(Asn). In addition to its essential role in protein synthesis, acts as a signaling molecule that induced migration of CCR3-expressing cells. Has an essential role in the development of the cerebral cortex, being required for proper proliferation of radial glial cells. The polypeptide is Asparagine--tRNA ligase, cytoplasmic (Mus musculus (Mouse)).